The sequence spans 180 residues: Shikimate kinase (180 aa).

ATP is bound at residue 14–19 (GAGKST). Ser-18 lines the Mg(2+) pocket. Positions 36, 60, and 82 each coordinate substrate. Arg-120 provides a ligand contact to ATP. Residue Arg-139 coordinates substrate.

Belongs to the shikimate kinase family. As to quaternary structure, monomer. Requires Mg(2+) as cofactor.

It localises to the cytoplasm. It catalyses the reaction shikimate + ATP = 3-phosphoshikimate + ADP + H(+). Its pathway is metabolic intermediate biosynthesis; chorismate biosynthesis; chorismate from D-erythrose 4-phosphate and phosphoenolpyruvate: step 5/7. Catalyzes the specific phosphorylation of the 3-hydroxyl group of shikimic acid using ATP as a cosubstrate. This is Shikimate kinase from Chromohalobacter salexigens (strain ATCC BAA-138 / DSM 3043 / CIP 106854 / NCIMB 13768 / 1H11).